The primary structure comprises 396 residues: S-adenosylmethionine synthase (396 aa).

An ATP-binding site is contributed by H15. D17 serves as a coordination point for Mg(2+). E43 lines the K(+) pocket. L-methionine is bound by residues E56 and Q99. Residues 99-109 form a flexible loop region; it reads QSGDIAQGVDT. ATP is bound by residues 173-175, 241-242, D250, 256-257, A273, and K277; these read DGK, RF, and RK. Residue D250 coordinates L-methionine. An L-methionine-binding site is contributed by K281.

This sequence belongs to the AdoMet synthase family. In terms of assembly, homotetramer; dimer of dimers. Mg(2+) serves as cofactor. Requires K(+) as cofactor.

It localises to the cytoplasm. It carries out the reaction L-methionine + ATP + H2O = S-adenosyl-L-methionine + phosphate + diphosphate. The protein operates within amino-acid biosynthesis; S-adenosyl-L-methionine biosynthesis; S-adenosyl-L-methionine from L-methionine: step 1/1. Its function is as follows. Catalyzes the formation of S-adenosylmethionine (AdoMet) from methionine and ATP. The overall synthetic reaction is composed of two sequential steps, AdoMet formation and the subsequent tripolyphosphate hydrolysis which occurs prior to release of AdoMet from the enzyme. This is S-adenosylmethionine synthase from Nocardioides sp. (strain ATCC BAA-499 / JS614).